Consider the following 1675-residue polypeptide: Clathrin heavy chain 1 (1675 aa).

Ala2 bears the N-acetylalanine mark. The segment at 2-479 is globular terminal domain; the sequence is AQILPIRFQE…VDPTLALSVY (478 aa). WD40-like repeat regions lie at residues 24–67, 68–107, 108–149, 150–195, 196–257, 258–301, and 302–330; these read NIGF…RPIS, ADSA…MTDD, VTFW…SSLA, GCQI…QPIE, GHAA…PEAQ, NDFP…ISGE, and TIFV…VCVE. Residue Ser67 is modified to Phosphoserine. Thr105 bears the Phosphothreonine mark. The residue at position 184 (Tyr184) is a Phosphotyrosine. A Phosphothreonine modification is found at Thr394. A binding site for the uncoating ATPase, involved in lattice disassembly region spans residues 449-465; the sequence is EKWLKEDKLECSEELGD. The tract at residues 480-523 is flexible linker; that stretch reads LRANVPNKVIQCFAETGQVQKIVLYAKKVGYTPDWIFLLRNVMR. The interval 524 to 634 is distal segment; sequence ISPDQGQQFA…RALEHFTDLY (111 aa). The interval 524-1675 is heavy chain arm; the sequence is ISPDQGQQFA…QPQPGFGYSM (1152 aa). CHCR repeat units follow at residues 537-683, 686-828, 833-972, 979-1124, 1128-1269, 1274-1420, and 1423-1566; these read VQDE…QICV, ASKY…SEDV, ILVV…PLID, LSET…VKEA, YIKA…FRLA, LHIV…LLLN, and LMVL…RECF. Tyr634 is subject to Phosphotyrosine. The segment at 639-1675 is proximal segment; the sequence is AVVHTHLLNP…QPQPGFGYSM (1037 aa). N6-succinyllysine is present on Lys737. An N6-acetyllysine modification is found at Lys856. Tyr899 carries the phosphotyrosine modification. At Ser1167 the chain carries Phosphoserine. The residue at position 1206 (Tyr1206) is a Phosphotyrosine. The involved in binding clathrin light chain stretch occupies residues 1213–1522; sequence AAKLLYNNVS…YLFKGNNRWK (310 aa). The residue at position 1229 (Ser1229) is a Phosphoserine. Residue Lys1441 is modified to N6-acetyllysine; alternate. The residue at position 1441 (Lys1441) is an N6-succinyllysine; alternate. Tyr1477 and Tyr1487 each carry phosphotyrosine. Phosphoserine is present on Ser1494. Lys1501 is modified (N6-acetyllysine). The trimerization stretch occupies residues 1550-1675; it reads AEELLQWFLQ…QPQPGFGYSM (126 aa).

It belongs to the clathrin heavy chain family. As to quaternary structure, clathrin triskelions, composed of 3 heavy chains and 3 light chains, are the basic subunits of the clathrin coat. In the presence of light chains, hub assembly is influenced by both the pH and the concentration of calcium. Interacts with HIP1. Interacts with DENND1A, DENND1B and DENND1C. Interacts with ERBB2. Interacts with FKBP6. Interacts with OCRL. Interacts with CKAP5 and TACC3 forming the TACC3/ch-TOG/clathrin complex located at spindle inter-microtubules bridges; the complex implicates clathrin triskelions; TACC3 and CLTC are proposed to form a composite microtubule interaction surface. Plays a role in early autophagosome formation. Interacts with ATG16L1 (via N-terminus). Interacts with RFTN1; the interaction occurs in response to pathogens. Interacts with USP2 isoform 2. Interacts with TMEM106B (via N-terminus). Interacts with DNAJC6; this interaction produces a local change in heavy-chain contacts, creating a detectable global distortion of the clathrin coat and leads to the recruitment of HSPA8.

It is found in the cytoplasmic vesicle membrane. Its subcellular location is the membrane. It localises to the coated pit. The protein localises to the melanosome. The protein resides in the cytoplasm. It is found in the cytoskeleton. Its subcellular location is the spindle. Functionally, clathrin is the major protein of the polyhedral coat of coated pits and vesicles. Two different adapter protein complexes link the clathrin lattice either to the plasma membrane or to the trans-Golgi network. Acts as a component of the TACC3/ch-TOG/clathrin complex proposed to contribute to stabilization of kinetochore fibers of the mitotic spindle by acting as inter-microtubule bridge. The TACC3/ch-TOG/clathrin complex is required for the maintenance of kinetochore fiber tension. Plays a role in early autophagosome formation. Interaction with DNAJC6 mediates the recruitment of HSPA8 to the clathrin lattice and creates local destabilization of the lattice promoting uncoating. The sequence is that of Clathrin heavy chain 1 from Mus musculus (Mouse).